Here is a 288-residue protein sequence, read N- to C-terminus: Polyamine aminopropyltransferase (288 aa).

The 230-residue stretch at 9 to 238 (ETLHDQFGQY…GIMTFAWATD (230 aa)) folds into the PABS domain. Gln33 lines the S-methyl-5'-thioadenosine pocket. Residues His64 and Asp88 each contribute to the spermidine site. Residues Glu108 and 140-141 (DG) each bind S-methyl-5'-thioadenosine. The active-site Proton acceptor is Asp158. A spermidine-binding site is contributed by 158–161 (DCTD). Pro165 contributes to the S-methyl-5'-thioadenosine binding site.

This sequence belongs to the spermidine/spermine synthase family. As to quaternary structure, homodimer or homotetramer.

It localises to the cytoplasm. The enzyme catalyses S-adenosyl 3-(methylsulfanyl)propylamine + putrescine = S-methyl-5'-thioadenosine + spermidine + H(+). The protein operates within amine and polyamine biosynthesis; spermidine biosynthesis; spermidine from putrescine: step 1/1. Its function is as follows. Catalyzes the irreversible transfer of a propylamine group from the amino donor S-adenosylmethioninamine (decarboxy-AdoMet) to putrescine (1,4-diaminobutane) to yield spermidine. In Escherichia coli O81 (strain ED1a), this protein is Polyamine aminopropyltransferase.